A 797-amino-acid polypeptide reads, in one-letter code: GDH/6PGL endoplasmic bifunctional protein (797 aa).

A signal peptide spans 1–24 (MKCPGVWGMLTVTMCVVFLGCPQA). A Pyrrolidone carboxylic acid modification is found at glutamine 25. Positions 25-531 (QELQGHVSVI…SGSHLSFSLG (507 aa)) are hexose-6-phosphate dehydrogenase. Residues 37-44 (GATGDLAK) and tyrosine 154 each bind NADP(+). An N-linked (GlcNAc...) asparagine glycan is attached at asparagine 162. Residue lysine 179 participates in NADP(+) binding. D-glucose 6-phosphate is bound by residues lysine 179, 209 to 213 (HYLGK), glutamate 248, and aspartate 267. Lysine 213 carries the post-translational modification N6-succinyllysine. The active-site Proton acceptor is the histidine 272. N-linked (GlcNAc...) asparagine glycosylation occurs at asparagine 287. The D-glucose 6-phosphate site is built by lysine 365 and arginine 370. Residue arginine 375 coordinates NADP(+). The linker stretch occupies residues 532-545 (QPEQLVPGPGSTPR). The 6-phosphogluconolactonase stretch occupies residues 546 to 797 (PSDFQVLGAK…WYMDYEAFLG (252 aa)). NADP(+) is bound at residue tryptophan 623. An N-linked (GlcNAc...) asparagine glycan is attached at asparagine 689.

It in the N-terminal section; belongs to the glucose-6-phosphate dehydrogenase family. In the C-terminal section; belongs to the glucosamine/galactosamine-6-phosphate isomerase family. 6-phosphogluconolactonase subfamily. In terms of assembly, homodimer.

Its subcellular location is the endoplasmic reticulum lumen. The catalysed reaction is D-glucose 6-phosphate + NAD(+) = 6-phospho-D-glucono-1,5-lactone + NADH + H(+). It carries out the reaction D-glucose 6-phosphate + NADP(+) = 6-phospho-D-glucono-1,5-lactone + NADPH + H(+). It catalyses the reaction 6-phospho-D-glucono-1,5-lactone + H2O = 6-phospho-D-gluconate + H(+). The enzyme catalyses 2-deoxy-D-glucose 6-phosphate + NAD(+) = 2-deoxy-6-phospho-D-glucono-1,5-lactone + NADH + H(+). The catalysed reaction is 2-deoxy-D-glucose 6-phosphate + NADP(+) = 2-deoxy-6-phospho-D-glucono-1,5-lactone + NADPH + H(+). It carries out the reaction D-galactose 6-phosphate + NADP(+) = 6-phospho-D-galactono-1,5-lactone + NADPH + H(+). It catalyses the reaction D-galactose 6-phosphate + NAD(+) = 6-phospho-D-galactono-1,5-lactone + NADH + H(+). The enzyme catalyses D-glucosamine 6-phosphate + NADP(+) = 2-amino-2-deoxy-6-phospho-D-glucono-1,5-lactone + NADPH + 2 H(+). The catalysed reaction is D-glucose + NAD(+) = D-glucono-1,5-lactone + NADH + H(+). It carries out the reaction D-glucose + NADP(+) = D-glucono-1,5-lactone + NADPH + H(+). It catalyses the reaction D-glucose 6-sulfate + NADP(+) = 6-sulfo-D-glucono-1,5-lactone + NADPH + H(+). The protein operates within carbohydrate degradation; pentose phosphate pathway; D-ribulose 5-phosphate from D-glucose 6-phosphate (oxidative stage). Its pathway is carbohydrate degradation; pentose phosphate pathway; D-ribulose 5-phosphate from D-glucose 6-phosphate (oxidative stage): step 2/3. Bifunctional enzyme localized in the lumen of the endoplasmic reticulum that catalyzes the first two steps of the oxidative branch of the pentose phosphate pathway/shunt, an alternative to glycolysis and a major source of reducing power and metabolic intermediates for biosynthetic processes. Has a hexose-6-phosphate dehydrogenase activity, with broad substrate specificity compared to glucose-6-phosphate 1-dehydrogenase/G6PD, and catalyzes the first step of the pentose phosphate pathway. In addition, acts as a 6-phosphogluconolactonase and catalyzes the second step of the pentose phosphate pathway. May have a dehydrogenase activity for alternative substrates including glucosamine 6-phosphate and glucose 6-sulfate. The main function of this enzyme is to provide reducing equivalents such as NADPH to maintain the adequate levels of reductive cofactors in the oxidizing environment of the endoplasmic reticulum. By producing NADPH that is needed by reductases of the lumen of the endoplasmic reticulum like corticosteroid 11-beta-dehydrogenase isozyme 1/HSD11B1, indirectly regulates their activity. The sequence is that of GDH/6PGL endoplasmic bifunctional protein from Oryctolagus cuniculus (Rabbit).